The primary structure comprises 442 residues: MAAQAPTEALKELQVGEAATTNGKEAPDGNAGRQRQRRLGGRGRCGPRCSPAVRVPLRRRRRRRRTRKKKKAPTAQSDPPRVLMSQLFPQKNYPVGEECEYLNENAYRTTDEEKRHLDNLNSDFLTDYREAAEIHRQVRQWAQKNIKPGQGLTEIAEGIEDGVRALTGHWGLEEGDALKGGMGFPTGLSINHCAAHYTPNLGNKMVLQQEDVMKVDFGVHVNGRIVDSAFTLAFEPKYDNLLTAVREATNAGVKEAGIDVRVGDIGGVIQEVMESYEVEIDGTTYPVKSIRNLNGHTIERWSIHGAKSVPIVKSNDTTKMEEGDVFAVETFGSTGNGYVRDDMEVSHYAKRGDSNVPLRLDSAKRLLNVINKNFGTLPFCRRYLDRLGQEKYLLGLNNLVSAGIVEAYPPLVDKKGSYTAQFEHTILIRPTVKEVISRGEDY.

A disordered region spans residues 1–81; the sequence is MAAQAPTEAL…APTAQSDPPR (81 aa). The span at 56-72 shows a compositional bias: basic residues; that stretch reads PLRRRRRRRRTRKKKKA. Residue histidine 196 coordinates substrate. The a divalent metal cation site is built by aspartate 216, aspartate 227, and histidine 296. Residue histidine 304 coordinates substrate. Residues glutamate 329 and glutamate 423 each contribute to the a divalent metal cation site.

This sequence belongs to the peptidase M24A family. Methionine aminopeptidase eukaryotic type 2 subfamily. Co(2+) serves as cofactor. Zn(2+) is required as a cofactor. Requires Mn(2+) as cofactor. It depends on Fe(2+) as a cofactor.

The protein resides in the cytoplasm. It catalyses the reaction Release of N-terminal amino acids, preferentially methionine, from peptides and arylamides.. Its function is as follows. Cotranslationally removes the N-terminal methionine from nascent proteins. The N-terminal methionine is often cleaved when the second residue in the primary sequence is small and uncharged (Met-Ala-, Cys, Gly, Pro, Ser, Thr, or Val). This is Methionine aminopeptidase 2 from Verticillium alfalfae (strain VaMs.102 / ATCC MYA-4576 / FGSC 10136) (Verticillium wilt of alfalfa).